The chain runs to 155 residues: MTEEATTTLSSADIIEIMKLLPHRYPFLMVDKIIEIDGDNSAIGIKNVTVNEPHFTGHFPEAPIMPGVLLIEGMAQTAGAICAKKEGQPGNLVYFMTIENARFRKPVVPGDRVEFHVAKHKQRGNIWKFHCDAKVDGAVVAEADIGAMIVRKEQA.

Residue histidine 58 is part of the active site.

This sequence belongs to the thioester dehydratase family. FabZ subfamily.

The protein localises to the cytoplasm. The enzyme catalyses a (3R)-hydroxyacyl-[ACP] = a (2E)-enoyl-[ACP] + H2O. Involved in unsaturated fatty acids biosynthesis. Catalyzes the dehydration of short chain beta-hydroxyacyl-ACPs and long chain saturated and unsaturated beta-hydroxyacyl-ACPs. The sequence is that of 3-hydroxyacyl-[acyl-carrier-protein] dehydratase FabZ from Rhizobium leguminosarum bv. trifolii (strain WSM2304).